The chain runs to 208 residues: Fibroblast growth factor 10 (208 aa).

The signal sequence occupies residues 1 to 37 (MWKWILTHCASAFPHLPGCCCCCFLLLFLVSSVPVTC). 2 N-linked (GlcNAc...) asparagine glycosylation sites follow: Asn-51 and Asn-196.

This sequence belongs to the heparin-binding growth factors family. As to quaternary structure, interacts with FGFR1 and FGFR2. Interacts with FGFBP1.

It localises to the secreted. In terms of biological role, plays an important role in the regulation of embryonic development, cell proliferation and cell differentiation. Required for normal branching morphogenesis. May play a role in wound healing. The chain is Fibroblast growth factor 10 (FGF10) from Homo sapiens (Human).